The primary structure comprises 102 residues: CRISPR-associated endoribonuclease Cas2 1 (102 aa).

Position 17 (aspartate 17) interacts with Mg(2+).

This sequence belongs to the CRISPR-associated endoribonuclease Cas2 protein family. Homodimer, forms a heterotetramer with a Cas1 homodimer. Mg(2+) is required as a cofactor.

Its function is as follows. CRISPR (clustered regularly interspaced short palindromic repeat), is an adaptive immune system that provides protection against mobile genetic elements (viruses, transposable elements and conjugative plasmids). CRISPR clusters contain sequences complementary to antecedent mobile elements and target invading nucleic acids. CRISPR clusters are transcribed and processed into CRISPR RNA (crRNA). Functions as a ssRNA-specific endoribonuclease. Involved in the integration of spacer DNA into the CRISPR cassette. The chain is CRISPR-associated endoribonuclease Cas2 1 from Rhodospirillum rubrum (strain ATCC 11170 / ATH 1.1.1 / DSM 467 / LMG 4362 / NCIMB 8255 / S1).